A 217-amino-acid chain; its full sequence is Adenylate kinase (217 aa).

10–15 is a binding site for ATP; the sequence is GAGKGT. The NMP stretch occupies residues 30–59; it reads STGDMLRAQIKAGTELGMKAKAIMDAGGLV. AMP contacts are provided by residues Thr-31, Arg-36, 57-59, 85-88, and Gln-92; these read GLV and GFPR. An LID region spans residues 122–159; that stretch reads GRRVHVASGRTYHVVFNPPKVAGKDDVTGEDLIQRDDD. ATP-binding positions include Arg-123 and 132 to 133; that span reads TY. 2 residues coordinate AMP: Arg-156 and Arg-167. Gly-203 lines the ATP pocket.

This sequence belongs to the adenylate kinase family. Monomer.

The protein localises to the cytoplasm. It catalyses the reaction AMP + ATP = 2 ADP. It functions in the pathway purine metabolism; AMP biosynthesis via salvage pathway; AMP from ADP: step 1/1. Its function is as follows. Catalyzes the reversible transfer of the terminal phosphate group between ATP and AMP. Plays an important role in cellular energy homeostasis and in adenine nucleotide metabolism. In Thiobacillus denitrificans (strain ATCC 25259 / T1), this protein is Adenylate kinase.